The following is a 103-amino-acid chain: Large ribosomal subunit protein uL24 (103 aa).

The protein belongs to the universal ribosomal protein uL24 family. As to quaternary structure, part of the 50S ribosomal subunit.

Functionally, one of two assembly initiator proteins, it binds directly to the 5'-end of the 23S rRNA, where it nucleates assembly of the 50S subunit. In terms of biological role, one of the proteins that surrounds the polypeptide exit tunnel on the outside of the subunit. This is Large ribosomal subunit protein uL24 from Geobacillus stearothermophilus (Bacillus stearothermophilus).